Consider the following 417-residue polypeptide: Serine hydroxymethyltransferase (417 aa).

(6S)-5,6,7,8-tetrahydrofolate is bound by residues Leu121 and 125 to 127 (GHL). An N6-(pyridoxal phosphate)lysine modification is found at Lys229. A (6S)-5,6,7,8-tetrahydrofolate-binding site is contributed by 355 to 357 (SPF).

The protein belongs to the SHMT family. As to quaternary structure, homodimer. Requires pyridoxal 5'-phosphate as cofactor.

It localises to the cytoplasm. The catalysed reaction is (6R)-5,10-methylene-5,6,7,8-tetrahydrofolate + glycine + H2O = (6S)-5,6,7,8-tetrahydrofolate + L-serine. It functions in the pathway one-carbon metabolism; tetrahydrofolate interconversion. The protein operates within amino-acid biosynthesis; glycine biosynthesis; glycine from L-serine: step 1/1. In terms of biological role, catalyzes the reversible interconversion of serine and glycine with tetrahydrofolate (THF) serving as the one-carbon carrier. This reaction serves as the major source of one-carbon groups required for the biosynthesis of purines, thymidylate, methionine, and other important biomolecules. Also exhibits THF-independent aldolase activity toward beta-hydroxyamino acids, producing glycine and aldehydes, via a retro-aldol mechanism. This is Serine hydroxymethyltransferase from Xylella fastidiosa (strain M12).